The chain runs to 289 residues: Eukaryotic translation initiation factor 3 subunit G (289 aa).

The tract at residues 1–33 (MSRPTKADWADDEEFDDPSALPPQQITTNKDGT) is disordered. The 79-residue stretch at 209 to 287 (ATLRVTNVSE…LILRVEFAKR (79 aa)) folds into the RRM domain.

It belongs to the eIF-3 subunit G family. As to quaternary structure, component of the eukaryotic translation initiation factor 3 (eIF-3) complex.

The protein localises to the cytoplasm. Functionally, RNA-binding component of the eukaryotic translation initiation factor 3 (eIF-3) complex, which is involved in protein synthesis of a specialized repertoire of mRNAs and, together with other initiation factors, stimulates binding of mRNA and methionyl-tRNAi to the 40S ribosome. The eIF-3 complex specifically targets and initiates translation of a subset of mRNAs involved in cell proliferation. This subunit can bind 18S rRNA. The sequence is that of Eukaryotic translation initiation factor 3 subunit G (tif35) from Emericella nidulans (strain FGSC A4 / ATCC 38163 / CBS 112.46 / NRRL 194 / M139) (Aspergillus nidulans).